We begin with the raw amino-acid sequence, 111 residues long: C-X-C motif chemokine 14 (111 aa).

The first 34 residues, 1-34 (MSLLPRRAPPVSMRLLAAALLLLLLALYTARVDG), serve as a signal peptide directing secretion. 2 cysteine pairs are disulfide-bonded: cysteine 37–cysteine 63 and cysteine 39–cysteine 84. The D-box motif lies at 67–81 (MVIITTKSVSRYRGQ).

The protein belongs to the intercrine alpha (chemokine CxC) family. In terms of processing, ubiquitinated, followed by degradation by the proteasome. As to expression, expressed in heart, brain, placenta, lung, liver, skeletal muscle, kidney and pancreas. Highly expressed in normal tissue without inflammatory stimuli and infrequently expressed in cancer cell lines. Weakly expressed in monocyte-derived dendritic cells. Not detected in lung or unstimulated peripheral blood lymphocytes.

It localises to the secreted. In terms of biological role, potent chemoattractant for neutrophils, and weaker for dendritic cells. Not chemotactic for T-cells, B-cells, monocytes, natural killer cells or granulocytes. Does not inhibit proliferation of myeloid progenitors in colony formation assays. The sequence is that of C-X-C motif chemokine 14 (CXCL14) from Homo sapiens (Human).